We begin with the raw amino-acid sequence, 252 residues long: Movement protein (252 aa).

The disordered stretch occupies residues 222–252 (YDGPYRPATTRPKSLLSSEDVKRASNKKNSS).

Belongs to the tobamovirus movement protein family.

Its function is as follows. Transports viral genome to neighboring plant cells directly through plasmosdesmata, without any budding. The movement protein allows efficient cell to cell propagation, by bypassing the host cell wall barrier. Displays RNA-binding activity. This Bidens pilosa (Hairy beggarticks) protein is Movement protein.